The sequence spans 471 residues: Anthocyanidin 3-O-glucosyltransferase (471 aa).

Catalysis depends on histidine 24, which acts as the Proton acceptor. An anthocyanidin is bound at residue histidine 24. The active-site Charge relay is the aspartate 130. Threonine 152 serves as a coordination point for UDP-alpha-D-glucose. Position 161 (histidine 161) interacts with an anthocyanidin. Alanine 352, glutamine 354, histidine 369, tryptophan 372, serine 374, and glutamate 377 together coordinate UDP-alpha-D-glucose. An anthocyanidin is bound at residue glycine 392. UDP-alpha-D-glucose contacts are provided by aspartate 393 and glutamine 394.

The protein belongs to the UDP-glycosyltransferase family.

It catalyses the reaction an anthocyanidin + UDP-alpha-D-glucose + H(+) = an anthocyanidin 3-O-beta-D-glucoside + UDP. It participates in pigment biosynthesis; anthocyanin biosynthesis. In terms of biological role, in the presence of other necessary color factors, this glycosylation reaction allows the accumulation of anthocyanin pigments. This is Anthocyanidin 3-O-glucosyltransferase (BZ1) from Zea mays (Maize).